A 924-amino-acid polypeptide reads, in one-letter code: Bifunctional glutamine synthetase adenylyltransferase/adenylyl-removing enzyme (924 aa).

An adenylyl removase region spans residues 1–422 (MQTKGCRFFM…QFKKLIQEEV (422 aa)). An adenylyl transferase region spans residues 424–924 (SPDETDTELE…PASTMALESE (501 aa)).

Belongs to the GlnE family. The cofactor is Mg(2+).

The catalysed reaction is [glutamine synthetase]-O(4)-(5'-adenylyl)-L-tyrosine + phosphate = [glutamine synthetase]-L-tyrosine + ADP. The enzyme catalyses [glutamine synthetase]-L-tyrosine + ATP = [glutamine synthetase]-O(4)-(5'-adenylyl)-L-tyrosine + diphosphate. Its function is as follows. Involved in the regulation of glutamine synthetase GlnA, a key enzyme in the process to assimilate ammonia. When cellular nitrogen levels are high, the C-terminal adenylyl transferase (AT) inactivates GlnA by covalent transfer of an adenylyl group from ATP to specific tyrosine residue of GlnA, thus reducing its activity. Conversely, when nitrogen levels are low, the N-terminal adenylyl removase (AR) activates GlnA by removing the adenylyl group by phosphorolysis, increasing its activity. The regulatory region of GlnE binds the signal transduction protein PII (GlnB) which indicates the nitrogen status of the cell. This chain is Bifunctional glutamine synthetase adenylyltransferase/adenylyl-removing enzyme, found in Acinetobacter baylyi (strain ATCC 33305 / BD413 / ADP1).